Reading from the N-terminus, the 229-residue chain is uncharacterized protein (229 aa).

Residues 66–94 (GHEKLQIQSALRDIESAENQARVQQCNAK) are a coiled coil.

This is an uncharacterized protein from Ostreid herpesvirus 1 (isolate France) (OsHV-1).